We begin with the raw amino-acid sequence, 331 residues long: LIM/homeobox protein Lhx9 (331 aa).

LIM zinc-binding domains are found at residues 71–132 and 133–194; these read TLCA…FSVK and RCAR…LVQG. The interval 253 to 275 is disordered; that stretch reads ETDLDRDQTYPPSQKTKRMRTSF. Positions 268–327 form a DNA-binding region, homeobox; the sequence is TKRMRTSFKHHQLRTMKSYFAINHNPDAKDLKQLAQKTGLTKRVLQGEQCSGFNSHTTRR.

It is found in the nucleus. In terms of biological role, may be involved in gonadal development. The chain is LIM/homeobox protein Lhx9 (lhx9) from Xenopus laevis (African clawed frog).